The following is a 122-amino-acid chain: NADH-quinone oxidoreductase subunit A (122 aa).

3 helical membrane passes run 10–30 (MIVL…LTLG), 66–86 (IFAL…PWAV), and 91–111 (LGLF…VGLA).

The protein belongs to the complex I subunit 3 family. As to quaternary structure, NDH-1 is composed of 14 different subunits. Subunits NuoA, H, J, K, L, M, N constitute the membrane sector of the complex.

Its subcellular location is the cell membrane. The enzyme catalyses a quinone + NADH + 5 H(+)(in) = a quinol + NAD(+) + 4 H(+)(out). Functionally, NDH-1 shuttles electrons from NADH, via FMN and iron-sulfur (Fe-S) centers, to quinones in the respiratory chain. The immediate electron acceptor for the enzyme in this species is believed to be a menaquinone. Couples the redox reaction to proton translocation (for every two electrons transferred, four hydrogen ions are translocated across the cytoplasmic membrane), and thus conserves the redox energy in a proton gradient. This Bacillus anthracis protein is NADH-quinone oxidoreductase subunit A.